We begin with the raw amino-acid sequence, 431 residues long: Serine hydroxymethyltransferase 2 (431 aa).

Residues Leu131 and 135–137 (GHL) each bind (6S)-5,6,7,8-tetrahydrofolate. Position 240 is an N6-(pyridoxal phosphate)lysine (Lys240). Glu256 provides a ligand contact to (6S)-5,6,7,8-tetrahydrofolate.

The protein belongs to the SHMT family. In terms of assembly, homodimer. Requires pyridoxal 5'-phosphate as cofactor.

It localises to the cytoplasm. It catalyses the reaction (6R)-5,10-methylene-5,6,7,8-tetrahydrofolate + glycine + H2O = (6S)-5,6,7,8-tetrahydrofolate + L-serine. The protein operates within one-carbon metabolism; tetrahydrofolate interconversion. It functions in the pathway amino-acid biosynthesis; glycine biosynthesis; glycine from L-serine: step 1/1. Functionally, catalyzes the reversible interconversion of serine and glycine with tetrahydrofolate (THF) serving as the one-carbon carrier. This reaction serves as the major source of one-carbon groups required for the biosynthesis of purines, thymidylate, methionine, and other important biomolecules. Also exhibits THF-independent aldolase activity toward beta-hydroxyamino acids, producing glycine and aldehydes, via a retro-aldol mechanism. The polypeptide is Serine hydroxymethyltransferase 2 (Vibrio vulnificus (strain CMCP6)).